Reading from the N-terminus, the 393-residue chain is Cysteine protease ATG4B (393 aa).

Cys73 functions as the Nucleophile in the catalytic mechanism. Residues Asp278 and His280 contribute to the active site. The LIR signature appears at 388-391; the sequence is FEIL.

This sequence belongs to the peptidase C54 family.

It is found in the cytoplasm. The protein localises to the cytosol. It localises to the cytoplasmic vesicle. The protein resides in the autophagosome. Its subcellular location is the endoplasmic reticulum. It is found in the mitochondrion. It catalyses the reaction [protein]-C-terminal L-amino acid-glycyl-phosphatidylethanolamide + H2O = [protein]-C-terminal L-amino acid-glycine + a 1,2-diacyl-sn-glycero-3-phosphoethanolamine. The enzyme catalyses [protein]-C-terminal L-amino acid-glycyl-phosphatidylserine + H2O = [protein]-C-terminal L-amino acid-glycine + a 1,2-diacyl-sn-glycero-3-phospho-L-serine. In terms of biological role, cysteine protease that plays a key role in autophagy by mediating both proteolytic activation and delipidation of ATG8 family proteins. Required for canonical autophagy (macroautophagy), non-canonical autophagy as well as for mitophagy. The protease activity is required for proteolytic activation of ATG8 family proteins: cleaves the C-terminal amino acid of ATG8 proteins to reveal a C-terminal glycine. Exposure of the glycine at the C-terminus is essential for ATG8 proteins conjugation to phosphatidylethanolamine (PE) and insertion to membranes, which is necessary for autophagy. Protease activity is also required to counteract formation of high-molecular weight conjugates of ATG8 proteins (ATG8ylation): acts as a deubiquitinating-like enzyme that removes ATG8 conjugated to other proteins, such as ATG3. In addition to the protease activity, also mediates delipidation of ATG8 family proteins. Catalyzes delipidation of PE-conjugated forms of ATG8 proteins during macroautophagy. Also involved in non-canonical autophagy, a parallel pathway involving conjugation of ATG8 proteins to single membranes at endolysosomal compartments, by catalyzing delipidation of ATG8 proteins conjugated to phosphatidylserine (PS). The chain is Cysteine protease ATG4B from Gallus gallus (Chicken).